A 237-amino-acid chain; its full sequence is UPF0688 protein C1orf174 homolog (237 aa).

Residues 1 to 187 (MRSRKLAGGV…LLDDDSNQPM (187 aa)) are disordered. The segment covering 11 to 28 (RSSARLRARSCSAASASA) has biased composition (low complexity). Residues 29 to 47 (QDTHVTTSAQTACQTPSSH) show a composition bias toward polar residues. Positions 48-76 (KATDRRTSKKFKYDKGHIVKSELQKHRSD) are enriched in basic and acidic residues. Phosphoserine is present on Ser183.

This sequence belongs to the UPF0688 family.

The protein resides in the nucleus. This is UPF0688 protein C1orf174 homolog from Bos taurus (Bovine).